A 354-amino-acid chain; its full sequence is 3-isopropylmalate dehydrogenase (354 aa).

73 to 86 contributes to the NAD(+) binding site; that stretch reads GPAYDKLDRPLRPE. Arg93, Arg103, Arg131, and Asp221 together coordinate substrate. Residues Asp221, Asp245, and Asp249 each contribute to the Mg(2+) site. Position 279–291 (279–291) interacts with NAD(+); it reads GSAPDIAGQNLAN.

It belongs to the isocitrate and isopropylmalate dehydrogenases family. LeuB type 1 subfamily. In terms of assembly, homodimer. The cofactor is Mg(2+). Mn(2+) serves as cofactor.

The protein localises to the cytoplasm. The catalysed reaction is (2R,3S)-3-isopropylmalate + NAD(+) = 4-methyl-2-oxopentanoate + CO2 + NADH. It functions in the pathway amino-acid biosynthesis; L-leucine biosynthesis; L-leucine from 3-methyl-2-oxobutanoate: step 3/4. Catalyzes the oxidation of 3-carboxy-2-hydroxy-4-methylpentanoate (3-isopropylmalate) to 3-carboxy-4-methyl-2-oxopentanoate. The product decarboxylates to 4-methyl-2 oxopentanoate. This is 3-isopropylmalate dehydrogenase from Chromobacterium violaceum (strain ATCC 12472 / DSM 30191 / JCM 1249 / CCUG 213 / NBRC 12614 / NCIMB 9131 / NCTC 9757 / MK).